We begin with the raw amino-acid sequence, 467 residues long: Dihydrolipoyl dehydrogenase 3 (467 aa).

FAD contacts are provided by residues 34 to 43, Lys52, and Ala116; that span reads EGRETLGGTC. Residues Cys43 and Cys48 are joined by a disulfide bond. Residues 182-186, Glu205, Val239, and 272-275 each bind NAD(+); these read GAGVI and AIGR. Positions 314 and 322 each coordinate FAD. His446 functions as the Proton acceptor in the catalytic mechanism.

Belongs to the class-I pyridine nucleotide-disulfide oxidoreductase family. Homodimer. FAD serves as cofactor.

It is found in the cytoplasm. The enzyme catalyses N(6)-[(R)-dihydrolipoyl]-L-lysyl-[protein] + NAD(+) = N(6)-[(R)-lipoyl]-L-lysyl-[protein] + NADH + H(+). In terms of biological role, LPD-3 may substitute for lipoamide dehydrogenase of the 2-oxoglutarate dehydrogenase and pyruvate multienzyme complexes when the latter is inactive or missing. This is Dihydrolipoyl dehydrogenase 3 (lpd3) from Pseudomonas aeruginosa (strain ATCC 15692 / DSM 22644 / CIP 104116 / JCM 14847 / LMG 12228 / 1C / PRS 101 / PAO1).